We begin with the raw amino-acid sequence, 211 residues long: Nucleoside triphosphate pyrophosphatase (211 aa).

The active-site Proton acceptor is the Asp-76.

This sequence belongs to the Maf family. A divalent metal cation is required as a cofactor.

The protein resides in the cytoplasm. The enzyme catalyses a ribonucleoside 5'-triphosphate + H2O = a ribonucleoside 5'-phosphate + diphosphate + H(+). It carries out the reaction a 2'-deoxyribonucleoside 5'-triphosphate + H2O = a 2'-deoxyribonucleoside 5'-phosphate + diphosphate + H(+). Functionally, nucleoside triphosphate pyrophosphatase. May have a dual role in cell division arrest and in preventing the incorporation of modified nucleotides into cellular nucleic acids. The sequence is that of Nucleoside triphosphate pyrophosphatase from Saccharopolyspora erythraea (strain ATCC 11635 / DSM 40517 / JCM 4748 / NBRC 13426 / NCIMB 8594 / NRRL 2338).